We begin with the raw amino-acid sequence, 286 residues long: Transcription factor MafA (286 aa).

A phosphoserine mark is found at S14 and S49. A compositionally biased stretch (low complexity) spans 51-85; the sequence is SSTPLSTPCSSVPSSPSFCAPSPGGQPSAGPTAAP. Residues 51-87 form a disordered region; that stretch reads SSTPLSTPCSSVPSSPSFCAPSPGGQPSAGPTAAPLG. Residues T53 and T57 each carry the phosphothreonine modification. A phosphoserine mark is found at S61 and S65. T113 is subject to Phosphothreonine. A disordered region spans residues 126–167; it reads HHHHHHHQSYESFRPQPFGGEELPPAAHHHNAHHHHHHHHLR. Basic residues predominate over residues 152 to 166; the sequence is AHHHNAHHHHHHHHL. Residues 199–224 form a basic motif region; sequence RLKQNRRTLKNRGYAQSCRYKRVQQR. The 64-residue stretch at 199–262 folds into the bZIP domain; it reads RLKQNRRTLK…DLYKEKYEKL (64 aa). A leucine-zipper region spans residues 227–248; sequence LENEKCQLQSQVEQLKQEVSRL. Positions 265–286 are disordered; sequence RGFPREPSPPAAPKTTAADFFM. S272 carries the post-translational modification Phosphoserine. A compositionally biased stretch (low complexity) spans 277 to 286; that stretch reads PKTTAADFFM.

Belongs to the bZIP family. Maf subfamily. In terms of assembly, forms homodimers or heterodimers. May interact (via leucine-zipper domain) with MAFB. May interact with FOS and JUN. Interacts with PCAF; this interaction impairs MAFA ubiquitination.

Its subcellular location is the nucleus. Functionally, transcription factor involved in transcription regulation during lens development, including that of crystallin and filensin/BFSP1 genes. Binds to CRE-type MARE 5'-TGCTGACGTCAGCA-3' and TRE-type MARE 5'-TGCTGACTCAGCA-3' DNA sequences. This chain is Transcription factor MafA (MAFA), found in Gallus gallus (Chicken).